Consider the following 71-residue polypeptide: DNA-directed RNA polymerase subunit epsilon (71 aa).

The protein belongs to the RNA polymerase subunit epsilon family. In terms of assembly, RNAP is composed of a core of 2 alpha, a beta and a beta' subunit. The core is associated with a delta subunit, and at least one of epsilon or omega. When a sigma factor is associated with the core the holoenzyme is formed, which can initiate transcription.

The enzyme catalyses RNA(n) + a ribonucleoside 5'-triphosphate = RNA(n+1) + diphosphate. A non-essential component of RNA polymerase (RNAP). This Geobacillus kaustophilus (strain HTA426) protein is DNA-directed RNA polymerase subunit epsilon.